We begin with the raw amino-acid sequence, 56 residues long: Ovomucoid (56 aa).

One can recognise a Kazal-like domain in the interval 6-56 (VDCSDHPKPACLQEQKPICGSDNKTYDNKCSFCNAVVDSNGTLTLSHFGKC). 3 disulfide bridges follow: cysteine 8/cysteine 38, cysteine 16/cysteine 35, and cysteine 24/cysteine 56. An N-linked (GlcNAc...) asparagine glycan is attached at asparagine 45.

The protein localises to the secreted. In Ortalis vetula (Plain chachalaca), this protein is Ovomucoid.